Here is a 291-residue protein sequence, read N- to C-terminus: MTTLAIDIGGTKLAAALIGADGQIRDRRELPTPASQTPQALRDALSALVSPLQAHAQRVAIASTGIIRDGSLLALNPHNLGGLLHFPLVKTLEQLTNLPTIAINDAQAAAWAEYQALDGDITDIVFITVSTGVGGGVVSGGKLRTGPGGLAGHIGHTLADPHGPVCGCGRTGCVEAIASGRGIAAAAQGELAGANAKTIFTRAGQGDEQAQQLIHRSARTLARLIADIKATTDCQCVVVGGSVGLAEGYLALVETYLAQEPEAFHVDLLAAHYRHDAGLLGAALLAQGEKL.

Residues 5–12 (AIDIGGTK) and 132–139 (GVGGGVVS) contribute to the ATP site. The Zn(2+) site is built by histidine 156, cysteine 166, cysteine 168, and cysteine 173.

Belongs to the ROK (NagC/XylR) family. NanK subfamily. Homodimer.

It catalyses the reaction an N-acyl-D-mannosamine + ATP = an N-acyl-D-mannosamine 6-phosphate + ADP + H(+). Its pathway is amino-sugar metabolism; N-acetylneuraminate degradation; D-fructose 6-phosphate from N-acetylneuraminate: step 2/5. In terms of biological role, catalyzes the phosphorylation of N-acetylmannosamine (ManNAc) to ManNAc-6-P. In Escherichia coli O127:H6 (strain E2348/69 / EPEC), this protein is N-acetylmannosamine kinase.